The primary structure comprises 147 residues: Ubiquitin-conjugating enzyme E2-17 kDa (147 aa).

The region spanning 1–147 is the UBC core domain; that stretch reads MALKRINKEL…AREWTRKYAM (147 aa). The Glycyl thioester intermediate role is filled by Cys85.

It belongs to the ubiquitin-conjugating enzyme family.

It carries out the reaction S-ubiquitinyl-[E1 ubiquitin-activating enzyme]-L-cysteine + [E2 ubiquitin-conjugating enzyme]-L-cysteine = [E1 ubiquitin-activating enzyme]-L-cysteine + S-ubiquitinyl-[E2 ubiquitin-conjugating enzyme]-L-cysteine.. The protein operates within protein modification; protein ubiquitination. Catalyzes the covalent attachment of ubiquitin to other proteins. Mediates the selective degradation of short-lived and abnormal proteins. Required for proper telomere behavior during cell divisions and possibly for ubiquitination of proteins involved in postmeiotic stages of spermatogenesis. Deletion mutations are lethal in homozygotes. The chain is Ubiquitin-conjugating enzyme E2-17 kDa (eff) from Drosophila melanogaster (Fruit fly).